A 199-amino-acid polypeptide reads, in one-letter code: NADH-quinone oxidoreductase subunit C (199 aa).

The protein belongs to the complex I 30 kDa subunit family. As to quaternary structure, NDH-1 is composed of 14 different subunits. Subunits NuoB, C, D, E, F, and G constitute the peripheral sector of the complex.

The protein resides in the cell inner membrane. The enzyme catalyses a quinone + NADH + 5 H(+)(in) = a quinol + NAD(+) + 4 H(+)(out). In terms of biological role, NDH-1 shuttles electrons from NADH, via FMN and iron-sulfur (Fe-S) centers, to quinones in the respiratory chain. The immediate electron acceptor for the enzyme in this species is believed to be ubiquinone. Couples the redox reaction to proton translocation (for every two electrons transferred, four hydrogen ions are translocated across the cytoplasmic membrane), and thus conserves the redox energy in a proton gradient. The chain is NADH-quinone oxidoreductase subunit C from Polynucleobacter necessarius subsp. necessarius (strain STIR1).